Here is an 87-residue protein sequence, read N- to C-terminus: uncharacterized protein (87 aa).

The tract at residues 67–87 is disordered; the sequence is TGGDPREAVVRPADQVEGYTG.

This is an uncharacterized protein from Mycobacterium bovis (strain ATCC BAA-935 / AF2122/97).